Here is a 2157-residue protein sequence, read N- to C-terminus: Polyketide synthase 2 (2157 aa).

The tract at residues 7–244 (FIFGDQTGGF…IPIPIWAPYH (238 aa)) is N-terminal acylcarrier protein transacylase domain (SAT). One can recognise a Ketosynthase family 3 (KS3) domain in the interval 374-807 (DAKIAIIGMS…GGNSALLLED (434 aa)). Active-site for beta-ketoacyl synthase activity residues include Cys-546, His-681, and His-723. The segment at 908–1213 (GFVFSGQGAQ…ASLHRKDDGW (306 aa)) is malonyl-CoA:ACP transacylase (MAT) domain. Ser-998 functions as the For acyl/malonyl transferase activity in the catalytic mechanism. The segment at 1290-1605 (TSSVQKIIQQ…RSLLNKVLPP (316 aa)) is product template (PT) domain. The tract at residues 1294-1428 (QKIIQQTDGP…CLLCFADPNS (135 aa)) is N-terminal hotdog fold. The 307-residue stretch at 1294 to 1600 (QKIIQQTDGP…FLGMSRSLLN (307 aa)) folds into the PKS/mFAS DH domain. His-1327 serves as the catalytic Proton acceptor; for dehydratase activity. Residues 1455–1600 (TDSLLSKGIV…FLGMSRSLLN (146 aa)) form a C-terminal hotdog fold region. Asp-1514 (proton donor; for dehydratase activity) is an active-site residue. The tract at residues 1629 to 1653 (AKDTERRPLDIPTRAQRQPNSPPTG) is disordered. A Carrier 1 domain is found at 1649–1726 (SPPTGTLGRI…ELKEFLGADQ (78 aa)). Ser-1686 is modified (O-(pantetheine 4'-phosphoryl)serine). The interval 1729-1765 (DDAVACESSNGQHTPQTSDKGSGTLAAQKPDDDTGSD) is disordered. The segment covering 1735 to 1749 (ESSNGQHTPQTSDKG) has biased composition (polar residues). The region spanning 1765–1839 (DTTLHRVCAI…SLQKALCGTE (75 aa)) is the Carrier 2 domain. Ser-1799 carries the post-translational modification O-(pantetheine 4'-phosphoryl)serine. The segment at 1875 to 2151 (ASPPHATSIL…MAEMGDLIGE (277 aa)) is thioesterase (TE) domain. Catalysis depends on Ser-1981, which acts as the For thioesterase activity.

Functionally, polyketide synthase; part of the Pks2 gene cluster that mediates the formation of infectious structures (appressoria), enabling these fungi to kill insects faster. The product of the Pks2 gene cluster is different from the one of Pks1 and has still not been identified. The chain is Polyketide synthase 2 from Metarhizium guizhouense (strain ARSEF 977).